Here is a 294-residue protein sequence, read N- to C-terminus: Thymidylate synthase (294 aa).

DUMP is bound by residues Arg30 and 156-157; that span reads RR. Cys176 (nucleophile) is an active-site residue. DUMP-binding positions include 196 to 199, Asn207, and 237 to 239; these read RSGD and HVY. Asp199 is a (6R)-5,10-methylene-5,6,7,8-tetrahydrofolate binding site. Ala293 provides a ligand contact to (6R)-5,10-methylene-5,6,7,8-tetrahydrofolate.

The protein belongs to the thymidylate synthase family. In terms of assembly, homodimer.

The enzyme catalyses dUMP + (6R)-5,10-methylene-5,6,7,8-tetrahydrofolate = 7,8-dihydrofolate + dTMP. The protein operates within pyrimidine metabolism; dTTP biosynthesis. In Ascaris suum (Pig roundworm), this protein is Thymidylate synthase.